Here is an 86-residue protein sequence, read N- to C-terminus: Cytochrome c oxidase subunit 6B1 (86 aa).

Ala-2 carries the N-acetylalanine modification. Residues 27–73 form the CHCH domain; sequence TRNCWQNYLDFHRCQKAMTAKGGDISVCEWYQRVYQSLCPTSWVTDW. Positions 30–40 match the Cx9C motif motif; that stretch reads CWQNYLDFHRC. Intrachain disulfides connect Cys-30-Cys-65 and Cys-40-Cys-54. The Cx10C motif signature appears at 54–65; sequence CEWYQRVYQSLC.

It belongs to the cytochrome c oxidase subunit 6B family. In terms of assembly, component of the cytochrome c oxidase (complex IV, CIV), a multisubunit enzyme composed of 14 subunits. The complex is composed of a catalytic core of 3 subunits MT-CO1, MT-CO2 and MT-CO3, encoded in the mitochondrial DNA, and 11 supernumerary subunits COX4I, COX5A, COX5B, COX6A, COX6B, COX6C, COX7A, COX7B, COX7C, COX8 and NDUFA4, which are encoded in the nuclear genome. The complex exists as a monomer or a dimer and forms supercomplexes (SCs) in the inner mitochondrial membrane with NADH-ubiquinone oxidoreductase (complex I, CI) and ubiquinol-cytochrome c oxidoreductase (cytochrome b-c1 complex, complex III, CIII), resulting in different assemblies (supercomplex SCI(1)III(2)IV(1) and megacomplex MCI(2)III(2)IV(2)).

The protein resides in the mitochondrion inner membrane. It functions in the pathway energy metabolism; oxidative phosphorylation. In terms of biological role, component of the cytochrome c oxidase, the last enzyme in the mitochondrial electron transport chain which drives oxidative phosphorylation. The respiratory chain contains 3 multisubunit complexes succinate dehydrogenase (complex II, CII), ubiquinol-cytochrome c oxidoreductase (cytochrome b-c1 complex, complex III, CIII) and cytochrome c oxidase (complex IV, CIV), that cooperate to transfer electrons derived from NADH and succinate to molecular oxygen, creating an electrochemical gradient over the inner membrane that drives transmembrane transport and the ATP synthase. Cytochrome c oxidase is the component of the respiratory chain that catalyzes the reduction of oxygen to water. Electrons originating from reduced cytochrome c in the intermembrane space (IMS) are transferred via the dinuclear copper A center (CU(A)) of subunit 2 and heme A of subunit 1 to the active site in subunit 1, a binuclear center (BNC) formed by heme A3 and copper B (CU(B)). The BNC reduces molecular oxygen to 2 water molecules using 4 electrons from cytochrome c in the IMS and 4 protons from the mitochondrial matrix. The chain is Cytochrome c oxidase subunit 6B1 (COX6B1) from Pongo abelii (Sumatran orangutan).